The sequence spans 230 residues: Heptaprenylglyceryl phosphate synthase (230 aa).

Lysine 12 contacts sn-glycerol 1-phosphate. Residues aspartate 14 and threonine 40 each contribute to the Mg(2+) site. Residues 159-164, glycine 189, and 209-210 contribute to the sn-glycerol 1-phosphate site; these read YIEYSG and GD.

It belongs to the GGGP/HepGP synthase family. Group I subfamily. As to quaternary structure, homodimer. It depends on Mg(2+) as a cofactor.

The catalysed reaction is sn-glycerol 1-phosphate + all-trans-heptaprenyl diphosphate = 3-heptaprenyl-sn-glycero-1-phosphate + diphosphate. It participates in membrane lipid metabolism; glycerophospholipid metabolism. Its function is as follows. Prenyltransferase that catalyzes in vivo the transfer of the heptaprenyl moiety of heptaprenyl pyrophosphate (HepPP; 35 carbon atoms) to the C3 hydroxyl of sn-glycerol-1-phosphate (G1P), producing heptaprenylglyceryl phosphate (HepGP). This reaction is an ether-bond-formation step in the biosynthesis of archaea-type G1P-based membrane lipids found in Bacillales. The polypeptide is Heptaprenylglyceryl phosphate synthase (Staphylococcus aureus (strain USA300)).